Consider the following 532-residue polypeptide: Hepatocyte nuclear factor 1-beta-B (532 aa).

Positions 1 to 35 are dimerization; it reads MFTDMVSKLTSLQQELLSALLDSGVTKDVLVQALE. The HNF-p1 domain occupies 5-36; that stretch reads MVSKLTSLQQELLSALLDSGVTKDVLVQALED. Residues 74–95 are disordered; the sequence is TGAQGKGGKLSGDEGSEDGDDF. Residues 102 to 197 enclose the POU-specific atypical domain; sequence RELQSLNTEE…IDRQFDRVQG (96 aa). Positions 222-231 are enriched in gly residues; sequence SSGAAGGSGA. 2 disordered regions span residues 222–245 and 500–532; these read SSGA…KRMR and EAGQ…LQAW. Positions 244 to 324 form a DNA-binding region, homeobox; HNF1-type; sequence MRRNRFKWGP…NRRKEEAFRQ (81 aa). The span at 505-532 shows a compositional bias: polar residues; that stretch reads SHPSRYSTMDSSTITHLGSSKQCPLQAW.

It belongs to the HNF1 homeobox family. As to quaternary structure, binds DNA as a dimer. Can form homodimer or heterodimer with HNF1-alpha. First expressed at stage 10 in the intermediate mesoderm. Expressed in rhombomere r5 by 14 hpf with expression diminishing by 18 hpf.

The protein localises to the nucleus. In terms of biological role, transcription factor that binds to the inverted palindrome 5'-GTTAATNATTAAC-3'. Acts downstream of hnf1ba but is not required for induction of rhombomere r5/r6 gene expression in the hindbrain. The protein is Hepatocyte nuclear factor 1-beta-B of Danio rerio (Zebrafish).